Consider the following 320-residue polypeptide: Serpentine receptor class delta-40 (320 aa).

Transmembrane regions (helical) follow at residues 12–32, 42–62, 95–115, 133–153, 189–209, 243–263, and 273–293; these read IFYP…IYLI, MLKV…VVSC, YQVL…TFVF, IILL…IMVI, LINF…SFFF, AFLP…CILT, and FMTV…LYFV.

This sequence belongs to the nematode receptor-like protein srd family.

Its subcellular location is the membrane. This is Serpentine receptor class delta-40 (srd-40) from Caenorhabditis elegans.